A 242-amino-acid polypeptide reads, in one-letter code: uncharacterized protein (242 aa).

The protein localises to the cytoplasm. It is found in the nucleus. This is an uncharacterized protein from Schizosaccharomyces pombe (strain 972 / ATCC 24843) (Fission yeast).